A 167-amino-acid polypeptide reads, in one-letter code: Small ribosomal subunit protein uS5 (167 aa).

The S5 DRBM domain occupies 12 to 75 (LQEKLVQVNR…DAARKNMITV (64 aa)).

Belongs to the universal ribosomal protein uS5 family. In terms of assembly, part of the 30S ribosomal subunit. Contacts proteins S4 and S8.

Functionally, with S4 and S12 plays an important role in translational accuracy. Located at the back of the 30S subunit body where it stabilizes the conformation of the head with respect to the body. The protein is Small ribosomal subunit protein uS5 of Hahella chejuensis (strain KCTC 2396).